A 101-amino-acid polypeptide reads, in one-letter code: Small ribosomal subunit protein uS14 (101 aa).

This sequence belongs to the universal ribosomal protein uS14 family. As to quaternary structure, part of the 30S ribosomal subunit. Contacts proteins S3 and S10.

Functionally, binds 16S rRNA, required for the assembly of 30S particles and may also be responsible for determining the conformation of the 16S rRNA at the A site. This Bordetella parapertussis (strain 12822 / ATCC BAA-587 / NCTC 13253) protein is Small ribosomal subunit protein uS14.